The following is a 555-amino-acid chain: Formate--tetrahydrofolate ligase (555 aa).

65–72 (TPAGEGKS) lines the ATP pocket.

This sequence belongs to the formate--tetrahydrofolate ligase family.

It carries out the reaction (6S)-5,6,7,8-tetrahydrofolate + formate + ATP = (6R)-10-formyltetrahydrofolate + ADP + phosphate. The protein operates within one-carbon metabolism; tetrahydrofolate interconversion. This chain is Formate--tetrahydrofolate ligase, found in Lactococcus lactis subsp. lactis (strain IL1403) (Streptococcus lactis).